Reading from the N-terminus, the 87-residue chain is MVNMKASMFLTFAGLVLLFVVCYASESEEKEFPKEMLSSIFAVDNDFKQEERDCAGYMRECEEKLCCSGYVCSSRWKWCVLPAPWRR.

An N-terminal signal peptide occupies residues 1 to 24 (MVNMKASMFLTFAGLVLLFVVCYA). A propeptide spanning residues 25–52 (SESEEKEFPKEMLSSIFAVDNDFKQEER) is cleaved from the precursor. 3 disulfides stabilise this stretch: C54-C67, C61-C72, and C66-C79.

This sequence belongs to the neurotoxin 10 (Hwtx-1) family. 51 (Hntx-8) subfamily. Hntx-8 sub-subfamily. Expressed by the venom gland.

It is found in the secreted. Its function is as follows. Ion channel inhibitor. This chain is U3-theraphotoxin-Hhn1q, found in Cyriopagopus hainanus (Chinese bird spider).